The chain runs to 89 residues: Small ribosomal subunit protein uS15 (89 aa).

The tract at residues Met-1–Pro-25 is disordered.

The protein belongs to the universal ribosomal protein uS15 family. As to quaternary structure, part of the 30S ribosomal subunit. Forms a bridge to the 50S subunit in the 70S ribosome, contacting the 23S rRNA.

One of the primary rRNA binding proteins, it binds directly to 16S rRNA where it helps nucleate assembly of the platform of the 30S subunit by binding and bridging several RNA helices of the 16S rRNA. Functionally, forms an intersubunit bridge (bridge B4) with the 23S rRNA of the 50S subunit in the ribosome. This is Small ribosomal subunit protein uS15 from Alkalilimnicola ehrlichii (strain ATCC BAA-1101 / DSM 17681 / MLHE-1).